Here is a 227-residue protein sequence, read N- to C-terminus: Urease subunit gamma/beta (227 aa).

The urease gamma stretch occupies residues 1–101 (MRLTPTERDR…LAVVADPVGG (101 aa)). The interval 102–227 (GGLGDDAPGA…AACGYLGADR (126 aa)) is urease beta.

In the N-terminal section; belongs to the urease gamma subunit family. It in the C-terminal section; belongs to the urease beta subunit family. As to quaternary structure, heterohexamer of 3 UreC (alpha) and 3 UreAB (gamma/beta) subunits.

It is found in the cytoplasm. The catalysed reaction is urea + 2 H2O + H(+) = hydrogencarbonate + 2 NH4(+). Its pathway is nitrogen metabolism; urea degradation; CO(2) and NH(3) from urea (urease route): step 1/1. This Streptomyces coelicolor (strain ATCC BAA-471 / A3(2) / M145) protein is Urease subunit gamma/beta.